The following is a 210-amino-acid chain: Ribonuclease HII (210 aa).

The 193-residue stretch at 18–210 (GLIAGVDEVG…FKPVKALLGL (193 aa)) folds into the RNase H type-2 domain. Positions 24, 25, and 116 each coordinate a divalent metal cation.

This sequence belongs to the RNase HII family. It depends on Mn(2+) as a cofactor. Mg(2+) is required as a cofactor.

It localises to the cytoplasm. It catalyses the reaction Endonucleolytic cleavage to 5'-phosphomonoester.. Its function is as follows. Endonuclease that specifically degrades the RNA of RNA-DNA hybrids. In Shewanella baltica (strain OS155 / ATCC BAA-1091), this protein is Ribonuclease HII.